Consider the following 627-residue polypeptide: Endoglucanase 5 (627 aa).

The signal sequence occupies residues 1 to 26 (MRKFGGSLFGVSLLLSVLLAAATAAA). Asp-83 serves as the catalytic Nucleophile. The N-linked (GlcNAc...) asparagine glycan is linked to Asn-196. His-416 is a catalytic residue. An N-linked (GlcNAc...) asparagine glycan is attached at Asn-465. Active-site residues include Asp-468 and Glu-477. N-linked (GlcNAc...) asparagine glycosylation is present at Asn-561.

The protein belongs to the glycosyl hydrolase 9 (cellulase E) family.

It localises to the secreted. It catalyses the reaction Endohydrolysis of (1-&gt;4)-beta-D-glucosidic linkages in cellulose, lichenin and cereal beta-D-glucans.. The polypeptide is Endoglucanase 5 (Arabidopsis thaliana (Mouse-ear cress)).